A 279-amino-acid chain; its full sequence is Energy-coupling factor transporter ATP-binding protein EcfA1 (279 aa).

The region spanning 6–240 (VEFRNVSFRY…KDALREIGLD (235 aa)) is the ABC transporter domain. ATP is bound at residue 40 to 47 (GHNGSGKS).

Belongs to the ABC transporter superfamily. Energy-coupling factor EcfA family. Forms a stable energy-coupling factor (ECF) transporter complex composed of 2 membrane-embedded substrate-binding proteins (S component), 2 ATP-binding proteins (A component) and 2 transmembrane proteins (T component).

It is found in the cell membrane. Its function is as follows. ATP-binding (A) component of a common energy-coupling factor (ECF) ABC-transporter complex. Unlike classic ABC transporters this ECF transporter provides the energy necessary to transport a number of different substrates. This is Energy-coupling factor transporter ATP-binding protein EcfA1 from Oceanobacillus iheyensis (strain DSM 14371 / CIP 107618 / JCM 11309 / KCTC 3954 / HTE831).